The chain runs to 306 residues: Recombination-associated protein RdgC (306 aa).

Belongs to the RdgC family.

Its subcellular location is the cytoplasm. The protein resides in the nucleoid. Its function is as follows. May be involved in recombination. The sequence is that of Recombination-associated protein RdgC from Pseudomonas paraeruginosa (strain DSM 24068 / PA7) (Pseudomonas aeruginosa (strain PA7)).